Consider the following 198-residue polypeptide: NAD(P)H dehydrogenase (quinone) (198 aa).

The 186-residue stretch at 4–189 (ILVLYYSMYG…SIARYQGEYV (186 aa)) folds into the Flavodoxin-like domain. Residues 10-15 (SMYGHI) and 78-80 (TRF) each bind FMN. Y12 contributes to the NAD(+) binding site. W98 serves as a coordination point for substrate. Residues 113–118 (STGTGG) and H133 contribute to the FMN site.

The protein belongs to the WrbA family. Requires FMN as cofactor.

The catalysed reaction is a quinone + NADH + H(+) = a quinol + NAD(+). The enzyme catalyses a quinone + NADPH + H(+) = a quinol + NADP(+). The protein is NAD(P)H dehydrogenase (quinone) of Salmonella paratyphi B (strain ATCC BAA-1250 / SPB7).